Consider the following 257-residue polypeptide: Imidazole glycerol phosphate synthase subunit HisF (257 aa).

Residues aspartate 12 and aspartate 131 contribute to the active site.

It belongs to the HisA/HisF family. Heterodimer of HisH and HisF.

The protein localises to the cytoplasm. It carries out the reaction 5-[(5-phospho-1-deoxy-D-ribulos-1-ylimino)methylamino]-1-(5-phospho-beta-D-ribosyl)imidazole-4-carboxamide + L-glutamine = D-erythro-1-(imidazol-4-yl)glycerol 3-phosphate + 5-amino-1-(5-phospho-beta-D-ribosyl)imidazole-4-carboxamide + L-glutamate + H(+). It functions in the pathway amino-acid biosynthesis; L-histidine biosynthesis; L-histidine from 5-phospho-alpha-D-ribose 1-diphosphate: step 5/9. Its function is as follows. IGPS catalyzes the conversion of PRFAR and glutamine to IGP, AICAR and glutamate. The HisF subunit catalyzes the cyclization activity that produces IGP and AICAR from PRFAR using the ammonia provided by the HisH subunit. The protein is Imidazole glycerol phosphate synthase subunit HisF of Nocardia farcinica (strain IFM 10152).